A 455-amino-acid polypeptide reads, in one-letter code: SVGFKAGVKDYKLTYYTPDYETKDTDILAAFRVTPQPGVPPEEAGAAVAAESSTGTWTTVWTDGLTSLDRYKGRCYHIEPVAGEENQYIAYVAYPLDLFEEGSVTNMFTSIVGNVFGFKALRALRLEDLRIPTSYTKTFQGPPHGIQVERDKLNKYGRPLLGCTIKPKLGLSAKNYGRAVYECLRGGLDFTKDDENVNSQPFMRWRDRFLFCAEAIFKAQAETGEIKGHYLNATAGTCEEMMKRAVFARELGVPIVMHDYLTGGFTANTSLSHYCRDNGLLLHIHRAMHAVIDRQKNHGMHFRVLAKALRLSGGDHIHAGTVVGKLEGEREITLGFVDLLRDDFIEKDRSRGIYFTQDWVSLPGVLPVASGGIHVWHMPALTEIFGDDSVLQFGGGTLGHPWGNAPGAVANRVALEACVQARNEGRDLAREGNEIIREASKWSPELAAACEVWKE.

Lys5 carries the post-translational modification N6,N6,N6-trimethyllysine. Substrate is bound by residues Asn114 and Thr164. Lys166 (proton acceptor) is an active-site residue. Lys168 provides a ligand contact to substrate. Positions 192, 194, and 195 each coordinate Mg(2+). Residue Lys192 is modified to N6-carboxylysine. The Proton acceptor role is filled by His285. Substrate is bound by residues Arg286, His318, and Ser370.

The protein belongs to the RuBisCO large chain family. Type I subfamily. As to quaternary structure, heterohexadecamer of 8 large chains and 8 small chains; disulfide-linked. The disulfide link is formed within the large subunit homodimers. It depends on Mg(2+) as a cofactor. Post-translationally, the disulfide bond which can form in the large chain dimeric partners within the hexadecamer appears to be associated with oxidative stress and protein turnover.

Its subcellular location is the plastid. The protein resides in the chloroplast. The catalysed reaction is 2 (2R)-3-phosphoglycerate + 2 H(+) = D-ribulose 1,5-bisphosphate + CO2 + H2O. The enzyme catalyses D-ribulose 1,5-bisphosphate + O2 = 2-phosphoglycolate + (2R)-3-phosphoglycerate + 2 H(+). Functionally, ruBisCO catalyzes two reactions: the carboxylation of D-ribulose 1,5-bisphosphate, the primary event in carbon dioxide fixation, as well as the oxidative fragmentation of the pentose substrate in the photorespiration process. Both reactions occur simultaneously and in competition at the same active site. The chain is Ribulose bisphosphate carboxylase large chain from Senna didymobotrya (Popcorn cassia).